Consider the following 334-residue polypeptide: Holliday junction branch migration complex subunit RuvB (334 aa).

The tract at residues 1–181 (MQDRLISGTE…FGIVQRLEFY (181 aa)) is large ATPase domain (RuvB-L). ATP contacts are provided by residues Ile20, Arg21, Gly62, Lys65, Thr66, Thr67, 128–130 (EDY), Arg171, Tyr181, and Arg218. Thr66 provides a ligand contact to Mg(2+). The small ATPAse domain (RuvB-S) stretch occupies residues 182–252 (SVEDLTHIVS…MAQRALDMLN (71 aa)). Residues 255–334 (KAGLDTLDRR…FGMTPPEPKN (80 aa)) form a head domain (RuvB-H) region. Arg310 and Arg315 together coordinate DNA.

This sequence belongs to the RuvB family. Homohexamer. Forms an RuvA(8)-RuvB(12)-Holliday junction (HJ) complex. HJ DNA is sandwiched between 2 RuvA tetramers; dsDNA enters through RuvA and exits via RuvB. An RuvB hexamer assembles on each DNA strand where it exits the tetramer. Each RuvB hexamer is contacted by two RuvA subunits (via domain III) on 2 adjacent RuvB subunits; this complex drives branch migration. In the full resolvosome a probable DNA-RuvA(4)-RuvB(12)-RuvC(2) complex forms which resolves the HJ.

The protein resides in the cytoplasm. It carries out the reaction ATP + H2O = ADP + phosphate + H(+). Functionally, the RuvA-RuvB-RuvC complex processes Holliday junction (HJ) DNA during genetic recombination and DNA repair, while the RuvA-RuvB complex plays an important role in the rescue of blocked DNA replication forks via replication fork reversal (RFR). RuvA specifically binds to HJ cruciform DNA, conferring on it an open structure. The RuvB hexamer acts as an ATP-dependent pump, pulling dsDNA into and through the RuvAB complex. RuvB forms 2 homohexamers on either side of HJ DNA bound by 1 or 2 RuvA tetramers; 4 subunits per hexamer contact DNA at a time. Coordinated motions by a converter formed by DNA-disengaged RuvB subunits stimulates ATP hydrolysis and nucleotide exchange. Immobilization of the converter enables RuvB to convert the ATP-contained energy into a lever motion, pulling 2 nucleotides of DNA out of the RuvA tetramer per ATP hydrolyzed, thus driving DNA branch migration. The RuvB motors rotate together with the DNA substrate, which together with the progressing nucleotide cycle form the mechanistic basis for DNA recombination by continuous HJ branch migration. Branch migration allows RuvC to scan DNA until it finds its consensus sequence, where it cleaves and resolves cruciform DNA. The chain is Holliday junction branch migration complex subunit RuvB from Acinetobacter baumannii (strain AB307-0294).